The sequence spans 432 residues: Glutamate-1-semialdehyde 2,1-aminomutase (432 aa).

Lysine 272 bears the N6-(pyridoxal phosphate)lysine mark.

The protein belongs to the class-III pyridoxal-phosphate-dependent aminotransferase family. HemL subfamily. In terms of assembly, homodimer. Requires pyridoxal 5'-phosphate as cofactor.

It is found in the cytoplasm. It catalyses the reaction (S)-4-amino-5-oxopentanoate = 5-aminolevulinate. It participates in porphyrin-containing compound metabolism; protoporphyrin-IX biosynthesis; 5-aminolevulinate from L-glutamyl-tRNA(Glu): step 2/2. It functions in the pathway porphyrin-containing compound metabolism; chlorophyll biosynthesis. The protein is Glutamate-1-semialdehyde 2,1-aminomutase of Cyanothece sp. (strain PCC 7425 / ATCC 29141).